Reading from the N-terminus, the 252-residue chain is Probable phosphatase Shewmr4_2619 (252 aa).

Zn(2+)-binding residues include H8, H10, H16, H41, E74, H102, H132, D193, and H195.

Belongs to the PHP family. Requires Zn(2+) as cofactor.

The protein is Probable phosphatase Shewmr4_2619 of Shewanella sp. (strain MR-4).